Reading from the N-terminus, the 255-residue chain is 5-oxoprolinase subunit A (255 aa).

This sequence belongs to the LamB/PxpA family. As to quaternary structure, forms a complex composed of PxpA, PxpB and PxpC.

The enzyme catalyses 5-oxo-L-proline + ATP + 2 H2O = L-glutamate + ADP + phosphate + H(+). Catalyzes the cleavage of 5-oxoproline to form L-glutamate coupled to the hydrolysis of ATP to ADP and inorganic phosphate. The protein is 5-oxoprolinase subunit A of Rhodopseudomonas palustris (strain BisA53).